Here is a 571-residue protein sequence, read N- to C-terminus: S100P-binding protein (571 aa).

Residues 270-280 (SDIPFDGDIDE) are compositionally biased toward acidic residues. Disordered regions lie at residues 270–312 (SDIP…LESV) and 356–385 (NGQNNSNKVPLPPSDTAPGPQLPADPCSQS). Residues 299–309 (TSESTPASSEL) are compositionally biased toward polar residues. Residues 365–378 (PLPPSDTAPGPQLP) show a composition bias toward pro residues.

It localises to the nucleus. This Xenopus tropicalis (Western clawed frog) protein is S100P-binding protein (s100pbp).